A 447-amino-acid chain; its full sequence is Monocarboxylate transporter 11 (447 aa).

Topologically, residues 1-11 (MTPKPAGPPDG) are cytoplasmic. Helical transmembrane passes span 12-32 (GWGWVVAAAAFAVNGLSYGLL), 54-74 (AWVSALALAVQQAASPVGSAL), 80-100 (ARPVVMVGGVLTSLGLVFSAF), 107-127 (LYLGLGLLAGSGWALVFAPAL), 139-159 (VLAVGLALTGNGASSLLLAPA), 162-182 (FLLDTFGWRGALLLLGAVTLH), 219-239 (AFSVFALGTALIGGGYFVPYV), 249-269 (GMGGYGAALVVAVAAVGDACA), 288-308 (LVVFGSLTGLGVLAMGLVPTV), 330-350 (GSYAPLVFGVLPGLVGIGGVV), 354-374 (GLVMMLMSLGGLLGPPLSGFL), and 383-403 (ASFLVCSSFILSGSFIYMGLP). Topologically, residues 404–447 (RALPSCRPASPPATPPPERGELLPVPQVSLLSAGGTGSIRDTTC) are cytoplasmic.

The protein belongs to the major facilitator superfamily. Monocarboxylate porter (TC 2.A.1.13) family. In terms of assembly, interacts with isoform 2 of BSG.

It is found in the endoplasmic reticulum membrane. The protein resides in the cell membrane. The catalysed reaction is pyruvate(out) + H(+)(out) = pyruvate(in) + H(+)(in). In terms of biological role, proton-linked monocarboxylate transporter. It catalyzes the transport of pyruvate across the plasma membrane. Probably involved in hepatic lipid metabolism: overexpression results in an increase of triacylglycerol(TAG) levels, small increases in intracellular diacylglycerols and decreases in lysophosphatidylcholine, cholesterol ester and sphingomyelin lipids. In Mus musculus (Mouse), this protein is Monocarboxylate transporter 11 (Slc16a11).